Consider the following 1594-residue polypeptide: Transcription factor Gibbin (1594 aa).

4 disordered regions span residues Pro19–Asp111, Leu149–Ala241, Gln256–Gly307, and Cys367–Lys464. Positions Gly30 to Pro47 are enriched in pro residues. Residue Lys79 is modified to N6-acetyllysine. The segment covering Ser165–Arg177 has biased composition (polar residues). The segment covering Ser178–Ser193 has biased composition (basic and acidic residues). Residues Pro228 to Asp240 are compositionally biased toward acidic residues. At Ser267 the chain carries Phosphoserine. A compositionally biased stretch (low complexity) spans Pro272–Ala303. Residues Ile391–Gly401 show a composition bias toward basic residues. Residues Arg395–Gly407 constitute a DNA-binding region (a.T hook 1). The span at Glu427 to Glu447 shows a compositional bias: pro residues. Residues Lys541 to Leu553 constitute a DNA-binding region (a.T hook 2). The disordered stretch occupies residues Met578–Asp604. Ser593 bears the Phosphoserine mark. Residue Lys606 forms a Glycyl lysine isopeptide (Lys-Gly) (interchain with G-Cter in SUMO2) linkage. The interval Leu714 to Gly789 is disordered. A compositionally biased stretch (basic residues) spans Lys734–Lys743. Ser825 and Ser842 each carry phosphoserine. The residue at position 887 (Arg887) is an Omega-N-methylarginine. Ser892 bears the Phosphoserine mark. The tract at residues Lys942–Tyr967 is disordered. Ser1060 carries the phosphoserine modification. Disordered stretches follow at residues Val1152 to Leu1191 and Ser1245 to Gly1306. 3 stretches are compositionally biased toward low complexity: residues Ser1153 to Gln1168, Ser1180 to Leu1191, and Ser1245 to Pro1264. At Ser1180 the chain carries Phosphoserine. A phosphoserine mark is found at Ser1315, Ser1317, and Ser1392. Thr1394 carries the post-translational modification Phosphothreonine. Ser1396 carries the phosphoserine modification. Lys1402 is covalently cross-linked (Glycyl lysine isopeptide (Lys-Gly) (interchain with G-Cter in SUMO2)). The segment at His1495–Ala1525 is disordered. A phosphoserine mark is found at Ser1498 and Ser1540.

Its subcellular location is the nucleus. The protein resides in the chromosome. Its function is as follows. Transcription factor required for the proper patterning of the epidermis, which plays a key role in early epithelial morphogenesis. Directly binds promoter and enhancer regions and acts by maintaining local enhancer-promoter chromatin architecture. Interacts with many sequence-specific zinc-finger transcription factors and methyl-CpG-binding proteins to regulate the expression of mesoderm genes that wire surface ectoderm stratification. The polypeptide is Transcription factor Gibbin (Mus musculus (Mouse)).